The primary structure comprises 817 residues: Exocyst complex component 6 (817 aa).

Coiled coils occupy residues 87–149 and 247–270; these read QSFV…DQIA and TDAE…EIEV.

It belongs to the SEC15 family. In terms of assembly, the exocyst complex is composed of sec-3/exoc1, sec-5/exoc2, sec-6/exoc3, sec-8/exoc4, sec-10/exoc5, sec-15/exoc6, exo-70/exoc7 and exo-84/exoc8.

Component of the exocyst complex involved in the docking of exocytic vesicles with fusion sites on the plasma membrane. The protein is Exocyst complex component 6 (sec-15) of Caenorhabditis elegans.